The following is a 134-amino-acid chain: UPF0412 protein YaaI (134 aa).

An N-terminal signal peptide occupies residues 1–23 (MKSVFTISASLAISLMLCCTAQA).

The protein belongs to the UPF0412 family.

The chain is UPF0412 protein YaaI from Shigella dysenteriae serotype 1 (strain Sd197).